Reading from the N-terminus, the 94-residue chain is Co-chaperonin GroES (94 aa).

The protein belongs to the GroES chaperonin family. Heptamer of 7 subunits arranged in a ring. Interacts with the chaperonin GroEL.

It is found in the cytoplasm. In terms of biological role, together with the chaperonin GroEL, plays an essential role in assisting protein folding. The GroEL-GroES system forms a nano-cage that allows encapsulation of the non-native substrate proteins and provides a physical environment optimized to promote and accelerate protein folding. GroES binds to the apical surface of the GroEL ring, thereby capping the opening of the GroEL channel. The protein is Co-chaperonin GroES of Brevibacillus choshinensis.